Consider the following 365-residue polypeptide: tRNA-specific 2-thiouridylase MnmA (365 aa).

ATP is bound by residues 14–21 (AMSGGVDS) and leucine 40. Catalysis depends on cysteine 108, which acts as the Nucleophile. A disulfide bridge links cysteine 108 with cysteine 204. Glycine 132 contributes to the ATP binding site. The interval 154-156 (KDQ) is interaction with tRNA. Cysteine 204 functions as the Cysteine persulfide intermediate in the catalytic mechanism.

It belongs to the MnmA/TRMU family.

It is found in the cytoplasm. The catalysed reaction is S-sulfanyl-L-cysteinyl-[protein] + uridine(34) in tRNA + AH2 + ATP = 2-thiouridine(34) in tRNA + L-cysteinyl-[protein] + A + AMP + diphosphate + H(+). Its function is as follows. Catalyzes the 2-thiolation of uridine at the wobble position (U34) of tRNA, leading to the formation of s(2)U34. The polypeptide is tRNA-specific 2-thiouridylase MnmA (Rickettsia rickettsii (strain Iowa)).